We begin with the raw amino-acid sequence, 426 residues long: Enolase (426 aa).

Position 163 (Gln163) interacts with (2R)-2-phosphoglycerate. The active-site Proton donor is Glu205. Mg(2+) contacts are provided by Asp242, Glu286, and Asp313. Residues Lys338, Arg367, Ser368, and Lys389 each coordinate (2R)-2-phosphoglycerate. Catalysis depends on Lys338, which acts as the Proton acceptor.

The protein belongs to the enolase family. Mg(2+) is required as a cofactor.

The protein resides in the cytoplasm. It localises to the secreted. Its subcellular location is the cell surface. It catalyses the reaction (2R)-2-phosphoglycerate = phosphoenolpyruvate + H2O. It functions in the pathway carbohydrate degradation; glycolysis; pyruvate from D-glyceraldehyde 3-phosphate: step 4/5. Its function is as follows. Catalyzes the reversible conversion of 2-phosphoglycerate (2-PG) into phosphoenolpyruvate (PEP). It is essential for the degradation of carbohydrates via glycolysis. This chain is Enolase, found in Helicobacter acinonychis (strain Sheeba).